Here is a 428-residue protein sequence, read N- to C-terminus: 3-phosphoshikimate 1-carboxyvinyltransferase (428 aa).

The 3-phosphoshikimate site is built by K22, S23, and R27. Phosphoenolpyruvate is bound at residue K22. Residues G96 and R124 each contribute to the phosphoenolpyruvate site. Positions 170, 171, 172, 198, 314, 337, and 341 each coordinate 3-phosphoshikimate. Phosphoenolpyruvate is bound at residue Q172. D314 (proton acceptor) is an active-site residue. Residues R345, R387, and K412 each contribute to the phosphoenolpyruvate site.

It belongs to the EPSP synthase family. Monomer.

The protein localises to the cytoplasm. The enzyme catalyses 3-phosphoshikimate + phosphoenolpyruvate = 5-O-(1-carboxyvinyl)-3-phosphoshikimate + phosphate. It participates in metabolic intermediate biosynthesis; chorismate biosynthesis; chorismate from D-erythrose 4-phosphate and phosphoenolpyruvate: step 6/7. In terms of biological role, catalyzes the transfer of the enolpyruvyl moiety of phosphoenolpyruvate (PEP) to the 5-hydroxyl of shikimate-3-phosphate (S3P) to produce enolpyruvyl shikimate-3-phosphate and inorganic phosphate. The chain is 3-phosphoshikimate 1-carboxyvinyltransferase from Shewanella denitrificans (strain OS217 / ATCC BAA-1090 / DSM 15013).